We begin with the raw amino-acid sequence, 1179 residues long: Protein turtle homolog A (1179 aa).

A signal peptide spans 1–20 (MVWCLGLAVLSLVISQGADG). At 21–734 (RGKPEVVSVV…TQLPGLLPQP (714 aa)) the chain is on the extracellular side. 5 consecutive Ig-like domains span residues 24-124 (PEVV…DFAN), 136-216 (PQFQ…GSAT), 226-318 (PPVI…AYLT), 322-410 (PAQV…SPVT), and 418-502 (PAFI…TNVY). 5 disulfide bridges follow: C41-C108, C158-C206, C248-C301, C344-C395, and C440-C486. Residues N188 and N256 are each glycosylated (N-linked (GlcNAc...) asparagine). 2 Fibronectin type-III domains span residues 507–611 (SPHV…TTPA) and 623–718 (PLSP…TSGL). N513 and N524 each carry an N-linked (GlcNAc...) asparagine glycan. The tract at residues 606 to 626 (LPTTPAAPGLPPTEIPPPLSP) is disordered. Pro residues predominate over residues 613 to 626 (PGLPPTEIPPPLSP). A helical membrane pass occupies residues 735–755 (VLAGVVGGVCFLGVAVLVSIL). Residues 756–1179 (AGCLLNRRRA…VPHPEQATLL (424 aa)) are Cytoplasmic-facing. Disordered regions lie at residues 767–919 (RRRR…PLPG), 940–988 (DWPP…VVGA), and 1015–1079 (AAPR…KRRN). Over residues 785–800 (GKSAAPSALGSGSPDS) the composition is skewed to low complexity. At S809 the chain carries Phosphoserine. 2 stretches are compositionally biased toward pro residues: residues 826 to 836 (TPSPHPDPPSS) and 906 to 919 (VAPP…PLPG). At T972 the chain carries Phosphothreonine. The short motif at 1177 to 1179 (TLL) is the PDZ-binding element.

This sequence belongs to the immunoglobulin superfamily. Turtle family. As to quaternary structure, interacts with MAGI2 and SHANK1.

The protein localises to the cell membrane. The protein resides in the synapse. Functions in dendrite outgrowth and synapse maturation. This Homo sapiens (Human) protein is Protein turtle homolog A (IGSF9).